The following is a 637-amino-acid chain: 3D-(3,5/4)-trihydroxycyclohexane-1,2-dione hydrolase (637 aa).

Residue Glu-66 coordinates thiamine diphosphate. Positions 442–522 (SLPGDLQRLW…INILLFDNAG (81 aa)) are thiamine pyrophosphate binding. The Mg(2+) site is built by Asp-493 and Asn-520.

The protein belongs to the TPP enzyme family. Mg(2+) is required as a cofactor. Thiamine diphosphate serves as cofactor.

The enzyme catalyses 3D-3,5/4-trihydroxycyclohexane-1,2-dione + H2O = 5-deoxy-D-glucuronate + H(+). It participates in polyol metabolism; myo-inositol degradation into acetyl-CoA; acetyl-CoA from myo-inositol: step 3/7. Functionally, involved in the cleavage of the C1-C2 bond of 3D-(3,5/4)-trihydroxycyclohexane-1,2-dione (THcHDO) to yield 5-deoxy-glucuronate (5DG). In Shouchella clausii (strain KSM-K16) (Alkalihalobacillus clausii), this protein is 3D-(3,5/4)-trihydroxycyclohexane-1,2-dione hydrolase.